The sequence spans 297 residues: Phosphatidylglycerol--prolipoprotein diacylglyceryl transferase (297 aa).

Helical transmembrane passes span Phe-20–Val-40, Glu-57–Phe-77, Ala-105–Ile-125, and Ile-133–Gly-153. Arg-154 serves as a coordination point for a 1,2-diacyl-sn-glycero-3-phospho-(1'-sn-glycerol). The next 3 helical transmembrane spans lie at Pro-193 to Phe-213, Gly-225 to Leu-245, and Ala-266 to Leu-286.

Belongs to the Lgt family.

The protein localises to the cell inner membrane. The enzyme catalyses L-cysteinyl-[prolipoprotein] + a 1,2-diacyl-sn-glycero-3-phospho-(1'-sn-glycerol) = an S-1,2-diacyl-sn-glyceryl-L-cysteinyl-[prolipoprotein] + sn-glycerol 1-phosphate + H(+). It functions in the pathway protein modification; lipoprotein biosynthesis (diacylglyceryl transfer). Its function is as follows. Catalyzes the transfer of the diacylglyceryl group from phosphatidylglycerol to the sulfhydryl group of the N-terminal cysteine of a prolipoprotein, the first step in the formation of mature lipoproteins. The chain is Phosphatidylglycerol--prolipoprotein diacylglyceryl transferase from Prochlorococcus marinus (strain MIT 9215).